Consider the following 266-residue polypeptide: UPF0354 protein Lm4b_01619 (266 aa).

This sequence belongs to the UPF0354 family.

The protein is UPF0354 protein Lm4b_01619 of Listeria monocytogenes serotype 4b (strain CLIP80459).